Consider the following 103-residue polypeptide: Cell division protein FtsB (103 aa).

Residues methionine 1–lysine 3 lie on the Cytoplasmic side of the membrane. A helical membrane pass occupies residues leucine 4–phenylalanine 21. At glycine 22–arginine 103 the chain is on the periplasmic side. The stretch at arginine 31 to alanine 71 forms a coiled coil.

It belongs to the FtsB family. Part of a complex composed of FtsB, FtsL and FtsQ.

It is found in the cell inner membrane. Its function is as follows. Essential cell division protein. May link together the upstream cell division proteins, which are predominantly cytoplasmic, with the downstream cell division proteins, which are predominantly periplasmic. The protein is Cell division protein FtsB of Escherichia coli O81 (strain ED1a).